Consider the following 535-residue polypeptide: Cytochrome P450 monooxygenase claP (535 aa).

2 helical membrane-spanning segments follow: residues 7 to 27 and 225 to 245; these read IGTL…KLVG and YFSM…KLPT. Cysteine 472 contacts heme.

It belongs to the cytochrome P450 family. It depends on heme as a cofactor.

The protein resides in the membrane. Its pathway is secondary metabolite biosynthesis; terpenoid biosynthesis. Cytochrome P450 monooxygenase; part of the gene cluster that mediates the biosynthesis of clavilactone A, a meroterpenoid that features a unique benzo-fused ten-membered carbocyclic ring unit with an alpha,beta-epoxy-gamma-lactone moiety, forming an intriguing 10/5/3 tricyclic nested skeleton. Cytochrome P450 monooxygenases claO, claP, claQ, claU, and claW are close orthologs, suggesting that a redundant function or pseudogenes are present in the cla cluster. These monoxygenases are not involved in clavilactone A biosynthesis nor its modification. ClaR, ClaS and ClaT are sufficient to produce clavilactone A. The biosynthesis begins with the prenyltransferase claS that transfers geranyl pyrophosphate (GPP) to hydroquinone to produces geranylhydroquinone. The cytochrome P450 monooxygenase claR then catalyzes the diradical coupling reaction between the intramolecular hydroquinone and allyl moieties to form the benzo-fused ten-membered carbocyclic ring unit of wigantol. Finally the cytochrome P450 monooxygenase claT exquisitely and stereoselectively assembles the alpha,beta-epoxy-gamma-lactone moiety, producing clavilactone A via arnebinol A. This chain is Cytochrome P450 monooxygenase claP, found in Ampulloclitocybe clavipes (Club foot).